The sequence spans 314 residues: Lysophospholipase D GDPD1 (314 aa).

Residues 1 to 3 (MSS) lie on the Extracellular side of the membrane. Residues 4–24 (TAAFYLLSTLGGYLVTSFLLL) form a helical membrane-spanning segment. The Cytoplasmic portion of the chain corresponds to 25 to 195 (KYPTLLHQRK…VEKCYKENSD (171 aa)). The region spanning 40 to 309 (SKHISHRGGA…DYPTKLRDFL (270 aa)) is the GP-PDE domain. A divalent metal cation-binding residues include E72, D74, and H87. Residues 196–216 (IPILFSLQRVLLILGLFFTGL) form a helical membrane-spanning segment. At 217 to 314 (LPFVPIREQF…LRDFLHNFSA (98 aa)) the chain is on the extracellular side.

It belongs to the glycerophosphoryl diester phosphodiesterase family. As to expression, widely expressed with high expression level in testis.

The protein resides in the cytoplasm. Its subcellular location is the membrane. It is found in the perinuclear region. It localises to the endoplasmic reticulum. The enzyme catalyses a 1-O-alkyl-sn-glycero-3-phosphocholine + H2O = a 1-O-alkyl-sn-glycero-3-phosphate + choline + H(+). The catalysed reaction is 1-hexadecanoyl-sn-glycero-3-phosphocholine + H2O = 1-hexadecanoyl-sn-glycero-3-phosphate + choline + H(+). It carries out the reaction N-hexadecanoyl-sn-glycero-3-phosphoethanolamine + H2O = N-hexadecanoylethanolamine + sn-glycerol 3-phosphate + H(+). It catalyses the reaction N-(5Z,8Z,11Z,14Z-eicosatetraenoyl)-1-(9Z-octadecenoyl)-sn-glycero-3-phosphoethanolamine + H2O = N-(5Z,8Z,11Z,14Z-eicosatetraenoyl)-ethanolamine + 1-(9Z-octadecenoyl)-sn-glycero-3-phosphate + H(+). The enzyme catalyses N,1-di-(9Z-octadecenoyl)-sn-glycero-3-phosphoethanolamine + H2O = N-(9Z-octadecenoyl) ethanolamine + 1-(9Z-octadecenoyl)-sn-glycero-3-phosphate + H(+). The catalysed reaction is N-hexadecanoyl-1-(9Z-octadecenoyl)-sn-glycero-3-phosphoethanolamine + H2O = N-hexadecanoylethanolamine + 1-(9Z-octadecenoyl)-sn-glycero-3-phosphate + H(+). It carries out the reaction 1-O-(1Z-octadecenyl)-sn-glycero-3-phospho-N-hexadecanoyl-ethanolamine + H2O = 1-O-(1Z-octadecenyl)-sn-glycero-3-phosphate + N-hexadecanoylethanolamine + H(+). It catalyses the reaction 1-hexadecanoyl-sn-glycero-3-phosphoethanolamine + H2O = 1-hexadecanoyl-sn-glycero-3-phosphate + ethanolamine + H(+). The enzyme catalyses 1-O-hexadecyl-sn-glycero-3-phosphocholine + H2O = 1-O-hexadecyl-sn-glycero-3-phosphate + choline + H(+). The catalysed reaction is 1-(9Z-octadecenoyl)-sn-glycero-3-phosphocholine + H2O = 1-(9Z-octadecenoyl)-sn-glycero-3-phosphate + choline + H(+). It carries out the reaction N,1-dihexadecanoyl-sn-glycero-3-phosphoethanolamine + H2O = N-hexadecanoylethanolamine + 1-hexadecanoyl-sn-glycero-3-phosphate + H(+). It catalyses the reaction 1-O-(1Z-octadecenyl)-sn-glycero-3-phospho-(N-5Z,8Z,11Z,14Z-eicosatetraenoyl)-ethanolamine + H2O = 1-O-(1Z-octadecenyl)-sn-glycero-3-phosphate + N-(5Z,8Z,11Z,14Z-eicosatetraenoyl)-ethanolamine + H(+). The enzyme catalyses 1-O-(1Z-octadecenyl)-sn-glycero-3-phospho-(N-9Z-octadecenoyl)-ethanolamine + H2O = 1-O-(1Z-octadecenyl)-sn-glycero-3-phosphate + N-(9Z-octadecenoyl) ethanolamine + H(+). Its activity is regulated as follows. Lysophospholipase D activity is increased by magnesium and manganese and inhibited by calcium in a concentration dependent manner. Loss of lysophospholipase D activity by addition of EDTA. Its function is as follows. Hydrolyzes lysoglycerophospholipids to produce lysophosphatidic acid (LPA) and the corresponding amines. Shows a preference for 1-O-alkyl-sn-glycero-3-phosphocholine (lyso-PAF), lysophosphatidylethanolamine (lyso-PE) and lysophosphatidylcholine (lyso-PC). May be involved in bioactive N-acylethanolamine biosynthesis from both N-acyl-lysoplasmenylethanolamin (N-acyl-lysoPlsEt) and N-acyl-lysophosphatidylethanolamin (N-acyl-lysoPE). In addition, hydrolyzes glycerophospho-N-acylethanolamine to N-acylethanolamine. Does not display glycerophosphodiester phosphodiesterase activity, since it cannot hydrolyze either glycerophosphoinositol or glycerophosphocholine. This is Lysophospholipase D GDPD1 from Homo sapiens (Human).